A 314-amino-acid polypeptide reads, in one-letter code: Olfactory receptor 9A1 (314 aa).

At 1 to 24 (MLGNYSSATEFFLLGFPGSQEVCR) the chain is on the extracellular side. A glycan (N-linked (GlcNAc...) asparagine) is linked at Asn-4. A helical membrane pass occupies residues 25–45 (ILFATFFLLYAVTVMGNVVII). At 46–64 (ITVCVDKCLQSPIYFFLGH) the chain is on the cytoplasmic side. The chain crosses the membrane as a helical span at residues 65-85 (LCVLEILITSTAVPFMLWGLL). At 86–99 (LPSTQIMSLTACAA) the chain is on the extracellular side. Cys-97 and Cys-179 form a disulfide bridge. A helical transmembrane segment spans residues 100-120 (QLYLYLSLGTLELALMGVMAV). The Cytoplasmic portion of the chain corresponds to 121-140 (DRYVAVCNPLRYNIIMNSST). Residues 141-161 (FIWVIIVSWVLGFLSEIWPVY) form a helical membrane-spanning segment. The Extracellular segment spans residues 162-196 (ATFQLTFCKSSVLDHFYCDRGQLLKVSCEDTLFRE). A helical transmembrane segment spans residues 197–217 (FILFLMAVFIIIGSLIPTIVS). Topologically, residues 218-239 (YTYIISTNLKIPSASGWRKSFS) are cytoplasmic. A helical transmembrane segment spans residues 240–260 (TCASHFTYVVIGYGSCLFLYV). Residues 261 to 271 (KPKQTQAAEYN) are Extracellular-facing. The helical transmembrane segment at 272-292 (RVVSLLVLVVTPFLNPFIFTL) threads the bilayer. Over 293–314 (RNDKFIQAFGDGMKHCYKLLKN) the chain is Cytoplasmic.

This sequence belongs to the G-protein coupled receptor 1 family.

Its subcellular location is the cell membrane. Its function is as follows. Odorant receptor. The protein is Olfactory receptor 9A1 (OR9A1P) of Homo sapiens (Human).